The following is a 159-amino-acid chain: 6,7-dimethyl-8-ribityllumazine synthase (159 aa).

5-amino-6-(D-ribitylamino)uracil is bound by residues Trp-30, 64 to 66, and 88 to 90; these read TFE and CVI. Residue 93–94 coordinates (2S)-2-hydroxy-3-oxobutyl phosphate; sequence ET. The Proton donor role is filled by His-96. 5-amino-6-(D-ribitylamino)uracil is bound at residue Phe-121. Arg-135 contacts (2S)-2-hydroxy-3-oxobutyl phosphate.

It belongs to the DMRL synthase family.

It carries out the reaction (2S)-2-hydroxy-3-oxobutyl phosphate + 5-amino-6-(D-ribitylamino)uracil = 6,7-dimethyl-8-(1-D-ribityl)lumazine + phosphate + 2 H2O + H(+). The protein operates within cofactor biosynthesis; riboflavin biosynthesis; riboflavin from 2-hydroxy-3-oxobutyl phosphate and 5-amino-6-(D-ribitylamino)uracil: step 1/2. Its function is as follows. Catalyzes the formation of 6,7-dimethyl-8-ribityllumazine by condensation of 5-amino-6-(D-ribitylamino)uracil with 3,4-dihydroxy-2-butanone 4-phosphate. This is the penultimate step in the biosynthesis of riboflavin. This chain is 6,7-dimethyl-8-ribityllumazine synthase, found in Cytophaga hutchinsonii (strain ATCC 33406 / DSM 1761 / CIP 103989 / NBRC 15051 / NCIMB 9469 / D465).